The sequence spans 211 residues: Redox-sensing transcriptional repressor Rex (211 aa).

A DNA-binding region (H-T-H motif) is located at residues Leu18 to Phe57. Gly92–Gly97 contributes to the NAD(+) binding site.

It belongs to the transcriptional regulatory Rex family. In terms of assembly, homodimer.

Its subcellular location is the cytoplasm. In terms of biological role, modulates transcription in response to changes in cellular NADH/NAD(+) redox state. This Shouchella clausii (strain KSM-K16) (Alkalihalobacillus clausii) protein is Redox-sensing transcriptional repressor Rex.